The following is a 109-amino-acid chain: MPLYEFTFIAQQGLTQYELEGLVKGLSSLLTKNGAELLKYEYWGLLDFAYTIDKMNKGHYCMIYIKATPSSMDEFKRKVRLNEDVLRFLCLKKDKLPKGDSLMIQANQV.

It belongs to the bacterial ribosomal protein bS6 family.

Binds together with bS18 to 16S ribosomal RNA. This is Small ribosomal subunit protein bS6 from Ehrlichia canis (strain Jake).